A 138-amino-acid polypeptide reads, in one-letter code: MTWRQAVLLSCFSAVVLLSMLREGTSVSVGTMQMAGEEASEDAKQKIFMQESDASNFLKRRGKRSPKSRDEVNVENRQKLRVDELRREYYEEQRNEFENFVEEQNDEQEERSREAVEQWRQWHYDGLHPSYLYNRHHT.

The first 26 residues, 1 to 26 (MTWRQAVLLSCFSAVVLLSMLREGTS), serve as a signal peptide directing secretion. Positions 28–64 (SVGTMQMAGEEASEDAKQKIFMQESDASNFLKRRGKR) are cleaved as a propeptide — ucma-N. The stretch at 90–122 (YEEQRNEFENFVEEQNDEQEERSREAVEQWRQW) forms a coiled coil.

The protein belongs to the UCMA family. Proteolytically cleaved by a furin-like convertase to generate a persistent C-terminal fragment found in almost the entire cartilage matrix, and affecting osteoblast differentiation. Post-translationally, sulfated on tyrosine residues. Predominantly expressed in resting chondrocytes.

The protein resides in the secreted. The protein localises to the extracellular space. It localises to the extracellular matrix. May be involved in the negative control of osteogenic differentiation of osteochondrogenic precursor cells in peripheral zones of fetal cartilage and at the cartilage-bone interface. This chain is Unique cartilage matrix-associated protein (UCMA), found in Homo sapiens (Human).